A 92-amino-acid polypeptide reads, in one-letter code: Small ribosomal subunit protein uS19c (92 aa).

This sequence belongs to the universal ribosomal protein uS19 family.

The protein resides in the plastid. It is found in the chloroplast. Protein S19 forms a complex with S13 that binds strongly to the 16S ribosomal RNA. The protein is Small ribosomal subunit protein uS19c of Lemna minor (Common duckweed).